Reading from the N-terminus, the 236-residue chain is Purine nucleoside phosphorylase (236 aa).

H5 serves as a coordination point for a purine D-ribonucleoside. Phosphate contacts are provided by residues G21, R25, R43, and 86–89; that span reads RYGT. A purine D-ribonucleoside is bound by residues E163, 180 to 182, and 204 to 205; these read EME and SD.

It belongs to the PNP/UDP phosphorylase family. Homohexamer; disulfide-linked. Trimer of homodimers, with three symmetric intersubunit disulfide bonds linking the dimers to one another.

The catalysed reaction is S-methyl-5'-thioadenosine + phosphate = 5-(methylsulfanyl)-alpha-D-ribose 1-phosphate + adenine. It catalyses the reaction a purine D-ribonucleoside + phosphate = a purine nucleobase + alpha-D-ribose 1-phosphate. It carries out the reaction a purine 2'-deoxy-D-ribonucleoside + phosphate = a purine nucleobase + 2-deoxy-alpha-D-ribose 1-phosphate. It participates in purine metabolism; purine nucleoside salvage. Its function is as follows. Cleavage of guanosine or inosine to respective bases and sugar-1-phosphate molecules. Cleaves inosine, guanosine, and adenosine with a better efficiency than MTA. The sequence is that of Purine nucleoside phosphorylase from Saccharolobus solfataricus (strain ATCC 35092 / DSM 1617 / JCM 11322 / P2) (Sulfolobus solfataricus).